The chain runs to 137 residues: Small ribosomal subunit protein uS12 (137 aa).

Disordered stretches follow at residues Met-1–Ser-21 and Val-34–Lys-57. Asp-102 is modified (3-methylthioaspartic acid).

This sequence belongs to the universal ribosomal protein uS12 family. In terms of assembly, part of the 30S ribosomal subunit. Contacts proteins S8 and S17. May interact with IF1 in the 30S initiation complex.

With S4 and S5 plays an important role in translational accuracy. Its function is as follows. Interacts with and stabilizes bases of the 16S rRNA that are involved in tRNA selection in the A site and with the mRNA backbone. Located at the interface of the 30S and 50S subunits, it traverses the body of the 30S subunit contacting proteins on the other side and probably holding the rRNA structure together. The combined cluster of proteins S8, S12 and S17 appears to hold together the shoulder and platform of the 30S subunit. The chain is Small ribosomal subunit protein uS12 from Streptococcus uberis (strain ATCC BAA-854 / 0140J).